Consider the following 197-residue polypeptide: MTSLYLASGSPRRQELLAQLGVTFERIVTGIEEQRQPQESAQQYVVRLAREKAQAGVAQTAQDLPVLGADTIVILNGEVLEKPRDAEHAAQMLRKLSGQTHQVMTAVALADSQHILDCLVVTDVTFRTLTDEDIAGYVASGEPLDKAGAYGIQGLGGCFVRKINGSFHAVVGLPLVETYELLSNFNALREKRDKHDG.

Catalysis depends on Asp70, which acts as the Proton acceptor.

Belongs to the Maf family. YhdE subfamily. A divalent metal cation serves as cofactor.

It is found in the cytoplasm. It carries out the reaction dTTP + H2O = dTMP + diphosphate + H(+). It catalyses the reaction UTP + H2O = UMP + diphosphate + H(+). In terms of biological role, nucleoside triphosphate pyrophosphatase that hydrolyzes dTTP and UTP. May have a dual role in cell division arrest and in preventing the incorporation of modified nucleotides into cellular nucleic acids. The polypeptide is dTTP/UTP pyrophosphatase (yceF2) (Escherichia coli O6:K15:H31 (strain 536 / UPEC)).